Reading from the N-terminus, the 128-residue chain is Sulfurtransferase TusD (128 aa).

Cys-78 functions as the Cysteine persulfide intermediate in the catalytic mechanism.

It belongs to the DsrE/TusD family. Heterohexamer, formed by a dimer of trimers. The hexameric TusBCD complex contains 2 copies each of TusB, TusC and TusD. The TusBCD complex interacts with TusE.

The protein localises to the cytoplasm. Functionally, part of a sulfur-relay system required for 2-thiolation of 5-methylaminomethyl-2-thiouridine (mnm(5)s(2)U) at tRNA wobble positions. Accepts sulfur from TusA and transfers it in turn to TusE. The polypeptide is Sulfurtransferase TusD (Escherichia coli O45:K1 (strain S88 / ExPEC)).